A 137-amino-acid chain; its full sequence is Nucleoside diphosphate kinase (137 aa).

6 residues coordinate ATP: Lys9, Phe57, Arg85, Thr91, Arg102, and Asn112. His115 (pros-phosphohistidine intermediate) is an active-site residue.

Belongs to the NDK family. As to quaternary structure, homotetramer. Mg(2+) serves as cofactor.

Its subcellular location is the cytoplasm. It carries out the reaction a 2'-deoxyribonucleoside 5'-diphosphate + ATP = a 2'-deoxyribonucleoside 5'-triphosphate + ADP. The catalysed reaction is a ribonucleoside 5'-diphosphate + ATP = a ribonucleoside 5'-triphosphate + ADP. Its function is as follows. Major role in the synthesis of nucleoside triphosphates other than ATP. The ATP gamma phosphate is transferred to the NDP beta phosphate via a ping-pong mechanism, using a phosphorylated active-site intermediate. The sequence is that of Nucleoside diphosphate kinase from Campylobacter hominis (strain ATCC BAA-381 / DSM 21671 / CCUG 45161 / LMG 19568 / NCTC 13146 / CH001A).